Consider the following 1463-residue polypeptide: Regulating synaptic membrane exocytosis protein 1 (1463 aa).

A disordered region spans residues 1–26 (MSSAVGPRGPRPPTVPPPMQELPDLS). Residues 9 to 20 (GPRPPTVPPPMQ) are compositionally biased toward pro residues. The 184-residue stretch at 22 to 205 (LPDLSHLTEE…TKSGAWFFGS (184 aa)) folds into the RabBD domain. The FYVE-type zinc finger occupies 133–193 (KDDAPTCGIC…VCNLCRKQQE (61 aa)). Residues Cys-139, Cys-142, Cys-155, Cys-158, Cys-163, Cys-166, Cys-185, and Cys-188 each coordinate Zn(2+). Residues 205–393 (SGPQQPSQDG…DVELESESVS (189 aa)) are disordered. The span at 206-222 (GPQQPSQDGTLSDTATG) shows a compositional bias: polar residues. The span at 227-240 (VPREKKARLQERSR) shows a compositional bias: basic and acidic residues. Positions 241–256 (SQTPLSTAAVSSQDTA) are enriched in polar residues. The segment covering 327 to 372 (ADERERKERRETRRLEKGRSQDYPDRLEKREDGRVAEDEKQRKEEE) has biased composition (basic and acidic residues). Residues 381–391 (SCEDVELESES) show a composition bias toward acidic residues. Position 413 is a phosphoserine (Ser-413). In terms of domain architecture, PDZ spans 440–526 (RTTMPKESGA…EPQVEIIVSR (87 aa)). Residues 533–567 (RIPESSHPPLESSSSSFESQKMERPSISVISPTSP) form a disordered region. Positions 535-551 (PESSHPPLESSSSSFES) are enriched in low complexity. A phosphoserine mark is found at Ser-563 and Ser-566. The region spanning 577–700 (LPGQLSVKLW…ALLDDEPHWY (124 aa)) is the C2 1 domain. The segment at 705–856 (HDESSLPLPQ…YSSEPDSELL (152 aa)) is disordered. Ser-716 bears the Phosphoserine mark. Residues 770–779 (ATTLTVPEQQ) are compositionally biased toward polar residues. A Phosphoserine modification is found at Ser-812. Positions 827-844 (RHHDASRSLADHRSRHAE) are enriched in basic and acidic residues. Ser-866 bears the Phosphoserine mark. The segment at 874–1049 (SELQPSLDRA…RQLPQVPVRS (176 aa)) is disordered. Residues 928–941 (PENDRHSRKSERSS) show a composition bias toward basic and acidic residues. Over residues 1021–1035 (QGSPTQSPPADTSFG) the composition is skewed to polar residues. Ser-1023 carries the phosphoserine modification. Thr-1025 is subject to Phosphothreonine. Phosphoserine is present on residues Ser-1027, Ser-1079, Ser-1081, Ser-1082, Ser-1110, Ser-1111, and Ser-1113. Positions 1104–1161 (DNASAKSSDSDVSDVSAISRASSTSRLSSTSFMSEQSERPRGRISSFTPKMQGRRMGT) are disordered. Residues 1116–1137 (SDVSAISRASSTSRLSSTSFMS) show a composition bias toward low complexity. Residue Ser-1187 is modified to Phosphoserine. Positions 1216 to 1266 (RSRSTSQLSQTESGHKKLKSTIQRSTETGMAAEMRKMVRQPSRESTDGSIN) are disordered. Over residues 1248–1261 (EMRKMVRQPSREST) the composition is skewed to basic and acidic residues. One can recognise a C2 2 domain in the interval 1309–1427 (AMGDIQIGME…DLSSMVIGWY (119 aa)). Phosphoserine is present on residues Ser-1448, Ser-1451, Ser-1454, and Ser-1463.

In terms of assembly, binds SNAP25, SYT1 and CACNA1B. Interaction with SYT1 is enhanced by calcium ions. Interaction with SNAP25 is weaker in the presence of calcium ions. Interacts with TSPOAP1 and RIMBP2; interacts with PPFIA3 and PPFIA4. Interacts with ERC1. Interacts with RAB3A, RAB3B and RAB3D that have been activated by GTP-binding. Interacts with RAB3C, RAB10, RAB26 and RAB37. Binds UNC13A. Post-translationally, phosphorylated by BRSK1.

It is found in the cell membrane. Its subcellular location is the synapse. The protein localises to the presynaptic cell membrane. In terms of biological role, rab effector involved in exocytosis. May act as scaffold protein that regulates neurotransmitter release at the active zone. Essential for maintaining normal probability of neurotransmitter release and for regulating release during short-term synaptic plasticity. Plays a role in dendrite formation by melanocytes. The chain is Regulating synaptic membrane exocytosis protein 1 (Rims1) from Mus musculus (Mouse).